Reading from the N-terminus, the 514-residue chain is 2-isopropylmalate synthase (514 aa).

One can recognise a Pyruvate carboxyltransferase domain in the interval 5–268 (LIIFDTTLRD…DVGIDTTQIV (264 aa)). The Mn(2+) site is built by aspartate 14, histidine 202, histidine 204, and asparagine 239. The tract at residues 395 to 514 (KFVSLSQHSE…KDDKLNPQRA (120 aa)) is regulatory domain.

The protein belongs to the alpha-IPM synthase/homocitrate synthase family. LeuA type 1 subfamily. In terms of assembly, homodimer. Mn(2+) serves as cofactor.

The protein localises to the cytoplasm. It catalyses the reaction 3-methyl-2-oxobutanoate + acetyl-CoA + H2O = (2S)-2-isopropylmalate + CoA + H(+). It functions in the pathway amino-acid biosynthesis; L-leucine biosynthesis; L-leucine from 3-methyl-2-oxobutanoate: step 1/4. Catalyzes the condensation of the acetyl group of acetyl-CoA with 3-methyl-2-oxobutanoate (2-ketoisovalerate) to form 3-carboxy-3-hydroxy-4-methylpentanoate (2-isopropylmalate). The protein is 2-isopropylmalate synthase of Burkholderia vietnamiensis (strain G4 / LMG 22486) (Burkholderia cepacia (strain R1808)).